The following is a 217-amino-acid chain: tRNA (guanine-N(7)-)-methyltransferase (217 aa).

The S-adenosyl-L-methionine site is built by glutamate 48, glutamate 73, asparagine 100, and aspartate 123. Aspartate 123 is a catalytic residue. The substrate site is built by lysine 127 and aspartate 159.

This sequence belongs to the class I-like SAM-binding methyltransferase superfamily. TrmB family.

The catalysed reaction is guanosine(46) in tRNA + S-adenosyl-L-methionine = N(7)-methylguanosine(46) in tRNA + S-adenosyl-L-homocysteine. It participates in tRNA modification; N(7)-methylguanine-tRNA biosynthesis. Catalyzes the formation of N(7)-methylguanine at position 46 (m7G46) in tRNA. The chain is tRNA (guanine-N(7)-)-methyltransferase from Leptospira interrogans serogroup Icterohaemorrhagiae serovar copenhageni (strain Fiocruz L1-130).